Here is a 398-residue protein sequence, read N- to C-terminus: Protein-glutamate methylesterase/protein-glutamine glutaminase (398 aa).

Residues 4 to 121 (KVLVVDDSSF…ATNKDDAILL (118 aa)) form the Response regulatory domain. At aspartate 55 the chain carries 4-aspartylphosphate. The interval 133 to 200 (RMYRSSSLTP…SANPTTSSIS (68 aa)) is disordered. 2 stretches are compositionally biased toward polar residues: residues 136-146 (RSSSLTPTSTI) and 168-200 (RLAS…SSIS). One can recognise a CheB-type methylesterase domain in the interval 205 to 398 (SGKQYKLLLI…EAILKESSRG (194 aa)). Active-site residues include serine 217, histidine 244, and aspartate 340.

It belongs to the CheB family. Post-translationally, phosphorylated by CheA. Phosphorylation of the N-terminal regulatory domain activates the methylesterase activity.

Its subcellular location is the cytoplasm. It carries out the reaction [protein]-L-glutamate 5-O-methyl ester + H2O = L-glutamyl-[protein] + methanol + H(+). It catalyses the reaction L-glutaminyl-[protein] + H2O = L-glutamyl-[protein] + NH4(+). Functionally, involved in chemotaxis. Part of a chemotaxis signal transduction system that modulates chemotaxis in response to various stimuli. Catalyzes the demethylation of specific methylglutamate residues introduced into the chemoreceptors (methyl-accepting chemotaxis proteins or MCP) by CheR. Also mediates the irreversible deamidation of specific glutamine residues to glutamic acid. This is Protein-glutamate methylesterase/protein-glutamine glutaminase from Shewanella frigidimarina (strain NCIMB 400).